The following is a 767-amino-acid chain: Probable beta-glucosidase K (767 aa).

Asn19 carries an N-linked (GlcNAc...) asparagine glycan. Residue Asp232 is part of the active site. N-linked (GlcNAc...) asparagine glycans are attached at residues Asn324, Asn477, and Asn749. Residues Glu405–Val552 form the PA14 domain. A disordered region spans residues Leu727 to Arg767. The segment covering Arg743–Gln757 has biased composition (polar residues).

This sequence belongs to the glycosyl hydrolase 3 family.

The protein resides in the secreted. It carries out the reaction Hydrolysis of terminal, non-reducing beta-D-glucosyl residues with release of beta-D-glucose.. It participates in glycan metabolism; cellulose degradation. Beta-glucosidases are one of a number of cellulolytic enzymes involved in the degradation of cellulosic biomass. Catalyzes the last step releasing glucose from the inhibitory cellobiose. The sequence is that of Probable beta-glucosidase K (bglK) from Aspergillus fumigatus (strain ATCC MYA-4609 / CBS 101355 / FGSC A1100 / Af293) (Neosartorya fumigata).